We begin with the raw amino-acid sequence, 387 residues long: Succinate--CoA ligase [ADP-forming] subunit beta (387 aa).

The ATP-grasp domain maps to 9 to 244 (KQLFASYGLP…VSQEDDRENR (236 aa)). ATP-binding positions include Lys46, 53–55 (GRG), Glu99, Cys102, and Glu107. Mg(2+) is bound by residues Asn199 and Asp213. Substrate is bound by residues Asn264 and 321-323 (GIV).

It belongs to the succinate/malate CoA ligase beta subunit family. As to quaternary structure, heterotetramer of two alpha and two beta subunits. It depends on Mg(2+) as a cofactor.

The catalysed reaction is succinate + ATP + CoA = succinyl-CoA + ADP + phosphate. It catalyses the reaction GTP + succinate + CoA = succinyl-CoA + GDP + phosphate. Its pathway is carbohydrate metabolism; tricarboxylic acid cycle; succinate from succinyl-CoA (ligase route): step 1/1. Its function is as follows. Succinyl-CoA synthetase functions in the citric acid cycle (TCA), coupling the hydrolysis of succinyl-CoA to the synthesis of either ATP or GTP and thus represents the only step of substrate-level phosphorylation in the TCA. The beta subunit provides nucleotide specificity of the enzyme and binds the substrate succinate, while the binding sites for coenzyme A and phosphate are found in the alpha subunit. The sequence is that of Succinate--CoA ligase [ADP-forming] subunit beta from Legionella pneumophila (strain Paris).